We begin with the raw amino-acid sequence, 144 residues long: Galectin b (144 aa).

One can recognise a Galectin domain in the interval 1 to 138 (DHIDLEFDVG…DAVLRKLCVV (138 aa)).

Its function is as follows. Lectin that binds beta-galactoside and a wide array of complex carbohydrates. In Aplysina lactuca (Marine sponge), this protein is Galectin b.